Consider the following 858-residue polypeptide: DNA replication licensing factor mcm4-A (858 aa).

The interval 1-125 is disordered; that stretch reads MSSPTSTPSR…ARKVKQVDLH (125 aa). 2 stretches are compositionally biased toward polar residues: residues 54-68 and 79-94; these read SPSG…SSPA and LDLS…SSRV. A C4-type zinc finger spans residues 301-326; it reads CQVCAFTTRVEIDRGRIAEPSVCKHC. Positions 453–662 constitute an MCM domain; it reads IYERLAAALA…YDRRLAHHLV (210 aa). Positions 466, 492, 511, 512, 613, 638, 727, and 730 each coordinate ATP. Residues 637-640 carry the Arginine finger motif; sequence SRFD.

Belongs to the MCM family. Component of the mcm2-7 complex (RLF-M). The complex forms a toroidal hexameric ring with the proposed subunit order mcm2-mcm6-mcm4-mcm7-mcm3-mcm5. The heterodimer of mmcm3/mcm5 interacts with mcm4, mmcm6, mcm7 and weakly with mcm2. Component of the CMG helicase complex, composed of the mcm2-7 complex, the GINS complex and cdc45. In terms of processing, hyperphosphorylated during mitosis in a mechanism requiring cdc2-cyclin B and other kinases. Undergoes dephosphorylation after exiting mitosis, existing in a partially phosphorylated state in the cytosolic interphase mcm complex which associates with the pre-replication complexes (pre-Rcs). Complete dephosphorylation inactivates the mcm complex, preventing its binding to chromatin. Becomes actively phosphorylated during S phase once the mcm complex is assembled on the chromatin. This chromatin-associated phosphorylation occurs during the activation of the pre-Rcs and is independent of cdks. Phosphorylated by the cdc7-dbf4b complex.

It localises to the nucleus. The protein localises to the chromosome. The catalysed reaction is ATP + H2O = ADP + phosphate + H(+). In terms of biological role, acts as a component of the MCM2-7 complex (MCM complex) which is the replicative helicase essential for 'once per cell cycle' DNA replication initiation and elongation in eukaryotic cells. Core component of CDC45-MCM-GINS (CMG) helicase, the molecular machine that unwinds template DNA during replication, and around which the replisome is built. The active ATPase sites in the MCM2-7 ring are formed through the interaction surfaces of two neighboring subunits such that a critical structure of a conserved arginine finger motif is provided in trans relative to the ATP-binding site of the Walker A box of the adjacent subunit. The six ATPase active sites, however, are likely to contribute differentially to the complex helicase activity. This is DNA replication licensing factor mcm4-A (mcm4-a) from Xenopus laevis (African clawed frog).